The chain runs to 315 residues: Glycine--tRNA ligase alpha subunit (315 aa).

Belongs to the class-II aminoacyl-tRNA synthetase family. In terms of assembly, tetramer of two alpha and two beta subunits.

It localises to the cytoplasm. The enzyme catalyses tRNA(Gly) + glycine + ATP = glycyl-tRNA(Gly) + AMP + diphosphate. This Pseudomonas syringae pv. tomato (strain ATCC BAA-871 / DC3000) protein is Glycine--tRNA ligase alpha subunit.